Here is a 260-residue protein sequence, read N- to C-terminus: MHTVTPIPAFNDNYIWLIHAKDSGGHYVVDPGDAKAVLDYLEQHQIVLDGILITHHHSDHTGGIAELQASHDHKLTVYGPDNENIKGINHPISGQTESVKPEKLDSDAAVFHLPGHTLGHIAYLIDDHLFCGDTLFSAGCGRLFEGTPAQMHHSLQTLAQLDETTLVYPAHEYTQANLAFALTVENDNEALIAHAAKVKQLRDQNLPSLPSSIGLEKQINPFLRPEQASIKQNLSCHFAQDVTDDGTSFTLLRQWKDNFL.

His-55, His-57, Asp-59, His-60, His-116, Asp-133, and His-171 together coordinate Zn(2+).

This sequence belongs to the metallo-beta-lactamase superfamily. Glyoxalase II family. As to quaternary structure, monomer. The cofactor is Zn(2+).

The enzyme catalyses an S-(2-hydroxyacyl)glutathione + H2O = a 2-hydroxy carboxylate + glutathione + H(+). Its pathway is secondary metabolite metabolism; methylglyoxal degradation; (R)-lactate from methylglyoxal: step 2/2. Functionally, thiolesterase that catalyzes the hydrolysis of S-D-lactoyl-glutathione to form glutathione and D-lactic acid. The protein is Hydroxyacylglutathione hydrolase of Shewanella loihica (strain ATCC BAA-1088 / PV-4).